Reading from the N-terminus, the 424-residue chain is Steryl acetyl hydrolase 1 (424 aa).

Ala2 carries the N-acetylalanine modification. Residues 2–45 are Cytoplasmic-facing; it reads AANSGLDSKVEYYRLQENEIISAVSSEDADQNDAGFRLSTIHLH. A helical; Signal-anchor for type II membrane protein transmembrane segment spans residues 46 to 66; the sequence is LFHGLKFAALLFTVVPVFIIL. Topologically, residues 67-424 are lumenal; sequence DSMKIIFQRK…IARILEFMQS (358 aa). Asn85 carries an N-linked (GlcNAc...) asparagine glycan. The Involved in the stabilization of the negatively charged intermediate by the formation of the oxyanion hole motif lies at 176-178; that stretch reads HGG. Ser250 is an active-site residue. Asn283 is a glycosylation site (N-linked (GlcNAc...) asparagine). His395 is an active-site residue. An N-linked (GlcNAc...) asparagine glycan is attached at Asn401.

The protein belongs to the 'GDXG' lipolytic enzyme family.

It localises to the endoplasmic reticulum membrane. Its function is as follows. Required for the deacetylation of acetylated sterols. Involved in the resistance to eugenol and pregnenolone toxicity. This chain is Steryl acetyl hydrolase 1 (SAY1), found in Saccharomyces cerevisiae (strain ATCC 204508 / S288c) (Baker's yeast).